The primary structure comprises 2038 residues: Fer-1-like protein 5 (2038 aa).

7 consecutive C2 domains span residues 1-100 (MLRV…MFVR), 145-265 (TQKK…TLLR), 307-424 (QNTR…QGMY), 1055-1186 (TPED…FTPL), 1225-1345 (IPCK…SLNY), 1467-1587 (PKPP…ARCG), and 1705-1853 (GPPG…KQCS). The Ca(2+) site is built by Asp1502, Asp1508, Asp1557, Phe1558, Asp1559, Asp1565, Asp1824, Ser1827, and Asp1830. Residues 1961-1981 (IICLVVTLVIGFILLNFVYSA) traverse the membrane as a helical segment.

The protein belongs to the ferlin family. Interacts (via second C2 domain) with EHD1 and EHD2. The cofactor is Ca(2+). Expressed in differentiating myoblasts and myotubes.

It localises to the cell membrane. The protein localises to the membrane. Plays a role in myoblast fusion; probable mediator of endocytic recycling for membrane trafficking events during myotube formation. In Mus musculus (Mouse), this protein is Fer-1-like protein 5 (Fer1l5).